A 274-amino-acid polypeptide reads, in one-letter code: Ribosomal RNA small subunit methyltransferase A (274 aa).

Residues H15, L17, G42, E64, D89, and N109 each coordinate S-adenosyl-L-methionine.

Belongs to the class I-like SAM-binding methyltransferase superfamily. rRNA adenine N(6)-methyltransferase family. RsmA subfamily.

It is found in the cytoplasm. The catalysed reaction is adenosine(1518)/adenosine(1519) in 16S rRNA + 4 S-adenosyl-L-methionine = N(6)-dimethyladenosine(1518)/N(6)-dimethyladenosine(1519) in 16S rRNA + 4 S-adenosyl-L-homocysteine + 4 H(+). Specifically dimethylates two adjacent adenosines (A1518 and A1519) in the loop of a conserved hairpin near the 3'-end of 16S rRNA in the 30S particle. May play a critical role in biogenesis of 30S subunits. The sequence is that of Ribosomal RNA small subunit methyltransferase A from Synechococcus sp. (strain CC9605).